The primary structure comprises 514 residues: Peptide chain release factor 3 (514 aa).

Residues 8–268 form the tr-type G domain; it reads KKRRTFAIIS…TFLKFAPEPH (261 aa). GTP-binding positions include 17–24, 85–89, and 139–142; these read SHPDAGKT, DTPGH, and NKLD.

This sequence belongs to the TRAFAC class translation factor GTPase superfamily. Classic translation factor GTPase family. PrfC subfamily.

It localises to the cytoplasm. Increases the formation of ribosomal termination complexes and stimulates activities of RF-1 and RF-2. It binds guanine nucleotides and has strong preference for UGA stop codons. It may interact directly with the ribosome. The stimulation of RF-1 and RF-2 is significantly reduced by GTP and GDP, but not by GMP. This chain is Peptide chain release factor 3, found in Streptococcus gordonii (strain Challis / ATCC 35105 / BCRC 15272 / CH1 / DL1 / V288).